The sequence spans 141 residues: Nucleoside diphosphate kinase (141 aa).

6 residues coordinate ATP: Lys-9, Phe-57, Arg-85, Thr-91, Arg-102, and Asn-112. His-115 (pros-phosphohistidine intermediate) is an active-site residue.

Belongs to the NDK family. In terms of assembly, homotetramer. Requires Mg(2+) as cofactor.

The protein resides in the cytoplasm. The enzyme catalyses a 2'-deoxyribonucleoside 5'-diphosphate + ATP = a 2'-deoxyribonucleoside 5'-triphosphate + ADP. It carries out the reaction a ribonucleoside 5'-diphosphate + ATP = a ribonucleoside 5'-triphosphate + ADP. Functionally, major role in the synthesis of nucleoside triphosphates other than ATP. The ATP gamma phosphate is transferred to the NDP beta phosphate via a ping-pong mechanism, using a phosphorylated active-site intermediate. The sequence is that of Nucleoside diphosphate kinase from Chlamydia trachomatis serovar D (strain ATCC VR-885 / DSM 19411 / UW-3/Cx).